The chain runs to 118 residues: Small ribosomal subunit protein uS13 (118 aa).

Residues 94 to 118 (SLPVRGQRTKTNARTRKGPRKPIKK) form a disordered region.

This sequence belongs to the universal ribosomal protein uS13 family. Part of the 30S ribosomal subunit. Forms a loose heterodimer with protein S19. Forms two bridges to the 50S subunit in the 70S ribosome.

Its function is as follows. Located at the top of the head of the 30S subunit, it contacts several helices of the 16S rRNA. In the 70S ribosome it contacts the 23S rRNA (bridge B1a) and protein L5 of the 50S subunit (bridge B1b), connecting the 2 subunits; these bridges are implicated in subunit movement. Contacts the tRNAs in the A and P-sites. The protein is Small ribosomal subunit protein uS13 of Actinobacillus pleuropneumoniae serotype 5b (strain L20).